A 279-amino-acid chain; its full sequence is NH(3)-dependent NAD(+) synthetase (279 aa).

Residue 39–46 (GLSGGIDS) participates in ATP binding. Residue aspartate 45 participates in Mg(2+) binding. Arginine 122 is a deamido-NAD(+) binding site. Threonine 142 contacts ATP. Glutamate 147 serves as a coordination point for Mg(2+). Residues lysine 155 and aspartate 162 each coordinate deamido-NAD(+). Lysine 171 and serine 193 together coordinate ATP. 253–254 (HK) is a binding site for deamido-NAD(+).

The protein belongs to the NAD synthetase family. In terms of assembly, homodimer.

It catalyses the reaction deamido-NAD(+) + NH4(+) + ATP = AMP + diphosphate + NAD(+) + H(+). The protein operates within cofactor biosynthesis; NAD(+) biosynthesis; NAD(+) from deamido-NAD(+) (ammonia route): step 1/1. Catalyzes the ATP-dependent amidation of deamido-NAD to form NAD. Uses ammonia as a nitrogen source. In Sulfolobus acidocaldarius (strain ATCC 33909 / DSM 639 / JCM 8929 / NBRC 15157 / NCIMB 11770), this protein is NH(3)-dependent NAD(+) synthetase.